A 167-amino-acid chain; its full sequence is Protein YfbM (167 aa).

As to quaternary structure, monomer.

The chain is Protein YfbM (yfbM) from Escherichia coli (strain K12).